Here is a 147-residue protein sequence, read N- to C-terminus: Interleukin-4 (147 aa).

An N-terminal signal peptide occupies residues 1–24 (MGLPAQLPVTLLCLLAGTAHFIQG). Cys48 and Cys88 form a disulfide bridge. Asn62 carries an N-linked (GlcNAc...) asparagine glycan.

The protein belongs to the IL-4/IL-13 family.

It localises to the secreted. Its function is as follows. Participates in at least several B-cell activation processes as well as of other cell types. It is a costimulator of DNA-synthesis. It induces the expression of class II MHC molecules on resting B-cells. It enhances both secretion and cell surface expression of IgE and IgG1. It also regulates the expression of the low affinity Fc receptor for IgE (CD23) on both lymphocytes and monocytes. Positively regulates IL31RA expression in macrophages. Stimulates autophagy in dendritic cells by interfering with mTORC1 signaling and through the induction of RUFY4. The sequence is that of Interleukin-4 (IL4) from Oryctolagus cuniculus (Rabbit).